Consider the following 463-residue polypeptide: Probable glucan endo-1,3-beta-glucosidase eglC (463 aa).

A signal peptide spans 1–18 (MQLTHLLAFALSLATSEA). N84 is a glycosylation site (N-linked (GlcNAc...) asparagine). E128 acts as the Proton donor in catalysis. N183 carries an N-linked (GlcNAc...) asparagine glycan. E239 serves as the catalytic Nucleophile. Residue N312 is glycosylated (N-linked (GlcNAc...) asparagine). Disordered regions lie at residues 317–354 (SASASSSAAGSATPVGSAVPSGSAAVNPSSSGIVSSAV) and 396–430 (SGSSATSTTAGSSSDSSSTNSGKSSSESSSTNSGA). A lipid anchor (GPI-anchor amidated glycine) is attached at G440. A propeptide spans 441-463 (GASSVSGSVFGALVAVFAFVATL) (removed in mature form).

It belongs to the glycosyl hydrolase 17 family. In terms of processing, the GPI-anchor is attached to the protein in the endoplasmic reticulum and serves to target the protein to the cell surface. There, the glucosamine-inositol phospholipid moiety is cleaved off and the GPI-modified mannoprotein is covalently attached via its lipidless GPI glycan remnant to the 1,6-beta-glucan of the outer cell wall layer.

Its subcellular location is the cell membrane. The protein localises to the secreted. It is found in the cell wall. The catalysed reaction is Hydrolysis of (1-&gt;3)-beta-D-glucosidic linkages in (1-&gt;3)-beta-D-glucans.. Its function is as follows. Glucanases play a role in cell expansion during growth, in cell-cell fusion during mating, and in spore release during sporulation. This enzyme may be involved in beta-glucan degradation and also function biosynthetically as a transglycosylase. This is Probable glucan endo-1,3-beta-glucosidase eglC (eglC) from Aspergillus oryzae (strain ATCC 42149 / RIB 40) (Yellow koji mold).